The primary structure comprises 188 residues: Elongation factor P (188 aa).

The protein belongs to the elongation factor P family.

The protein localises to the cytoplasm. It functions in the pathway protein biosynthesis; polypeptide chain elongation. Its function is as follows. Involved in peptide bond synthesis. Stimulates efficient translation and peptide-bond synthesis on native or reconstituted 70S ribosomes in vitro. Probably functions indirectly by altering the affinity of the ribosome for aminoacyl-tRNA, thus increasing their reactivity as acceptors for peptidyl transferase. This Gluconacetobacter diazotrophicus (strain ATCC 49037 / DSM 5601 / CCUG 37298 / CIP 103539 / LMG 7603 / PAl5) protein is Elongation factor P.